We begin with the raw amino-acid sequence, 432 residues long: Adenylosuccinate synthetase (432 aa).

GTP is bound by residues 12 to 18 and 40 to 42; these read GDEGKGK and GHT. Residue D13 is the Proton acceptor of the active site. Residues D13 and G40 each coordinate Mg(2+). IMP contacts are provided by residues 13-16, 38-41, T130, R144, Q225, T240, and R304; these read DEGK and NAGH. Residue H41 is the Proton donor of the active site. 300-306 contributes to the substrate binding site; sequence ATTGRPR. GTP contacts are provided by residues R306, 332–334, and 414–416; these read KLD and SVG.

Belongs to the adenylosuccinate synthetase family. As to quaternary structure, homodimer. Mg(2+) serves as cofactor.

The protein localises to the cytoplasm. It carries out the reaction IMP + L-aspartate + GTP = N(6)-(1,2-dicarboxyethyl)-AMP + GDP + phosphate + 2 H(+). It participates in purine metabolism; AMP biosynthesis via de novo pathway; AMP from IMP: step 1/2. Functionally, plays an important role in the de novo pathway of purine nucleotide biosynthesis. Catalyzes the first committed step in the biosynthesis of AMP from IMP. The chain is Adenylosuccinate synthetase from Anaeromyxobacter dehalogenans (strain 2CP-1 / ATCC BAA-258).